The chain runs to 440 residues: C4-dicarboxylate transport protein (440 aa).

The next 8 helical transmembrane spans lie at L8 to A28, F40 to I60, L74 to V94, G147 to K167, I187 to V207, L221 to L241, V288 to L308, and A354 to V374. The segment at D419 to G440 is disordered.

This sequence belongs to the dicarboxylate/amino acid:cation symporter (DAACS) (TC 2.A.23) family.

It is found in the cell inner membrane. Responsible for the transport of dicarboxylates such as succinate, fumarate, and malate from the periplasm across the membrane. The chain is C4-dicarboxylate transport protein from Anaeromyxobacter dehalogenans (strain 2CP-C).